The sequence spans 258 residues: Serine/arginine-rich splicing factor x16 (258 aa).

The RRM domain maps to 8–81 (RKVYVGDLGN…RRARVELSTG (74 aa)). Disordered regions lie at residues 81-113 (GKYARSGGGGGGGGGGGGGGGLGGRDRGGGGRG) and 130-258 (CRER…VSRD). The span at 86–103 (SGGGGGGGGGGGGGGGLG) shows a compositional bias: gly residues. The segment covering 104 to 113 (GRDRGGGGRG) has biased composition (basic and acidic residues). The segment at 116 to 132 (KCYECGGRGHFARHCRE) adopts a CCHC-type zinc-finger fold. Basic residues-rich tracts occupy residues 130–141 (CRERKARQRRRS) and 149–166 (STSRRRRTRSKSGTRSRS). 2 stretches are compositionally biased toward basic and acidic residues: residues 180-197 (NGRDENGSASRYSDHERN) and 210-221 (RRYEDEDDDRVR). 2 stretches are compositionally biased toward low complexity: residues 231-240 (RSASPAVRRG) and 249-258 (SSASRSVSRD).

In terms of assembly, interacts (via Arg/Ser-rich region) with Alsin2/CG7564, Rbp1 and Doa (via N-terminus). In terms of processing, highly phosphorylated. May be phosphorylated by the serine/threonine-protein kinase Doa.

The protein resides in the nucleus. Serine/arginine-rich splicing factor (SR protein) involved in differential exon usage during RNA transcript processing, probably by binding exonic splicing enhancer elements and recruiting components of the splicing machinery. Binds RNA stem-loop structures with consensus sequence 5'-CCGUNUNKNW-3'. Regulator of genes involved in lipid and carbohydrate metabolism, the immune response and the response to xenobiotics. The sequence is that of Serine/arginine-rich splicing factor x16 from Drosophila melanogaster (Fruit fly).